The chain runs to 195 residues: MAGARRLELGEALALGSGWRHACHALLYAPDPGMLFGRIPLRYAILMQMRFDGRLGFPGGFVDTQDRSLEDGLNRELREELGEAAAAFRVERTDYRSSHVGSGPRVVAHFYAKRLTLEELLAVEAGATRAKDHGLEVLGLVRVPLYTLRDGVGGLPTFLENSFIGSAREQLLEALQDLGLLQSGSISGLKIPAHH.

Residues 18 to 173 (GWRHACHALL…IGSAREQLLE (156 aa)) form the Nudix hydrolase domain. Substrate contacts are provided by H24, R50, and F57. Mn(2+)-binding residues include G59, E76, E80, and H99. A Nudix box motif is present at residues 61–82 (FVDTQDRSLEDGLNRELREELG). Position 170 (Q170) interacts with substrate. E173 contributes to the Mn(2+) binding site.

This sequence belongs to the Nudix hydrolase family. NUDT16 subfamily. In terms of assembly, homodimer. It depends on Mg(2+) as a cofactor. Requires Mn(2+) as cofactor. Co(2+) serves as cofactor. Expressed strongly in lung, kidney, adrenal gland, testis, heart and brain.

The protein localises to the nucleus. It localises to the nucleoplasm. Its subcellular location is the nucleolus. It is found in the cytoplasm. It carries out the reaction a 5'-end (N(7)-methyl 5'-triphosphoguanosine)-ribonucleoside in mRNA + H2O = N(7)-methyl-GDP + a 5'-end phospho-ribonucleoside in mRNA + 2 H(+). The catalysed reaction is IDP + H2O = IMP + phosphate + H(+). It catalyses the reaction dIDP + H2O = dIMP + phosphate + H(+). The enzyme catalyses a 5'-end NAD(+)-phospho-ribonucleoside in mRNA + H2O = a 5'-end phospho-adenosine-phospho-ribonucleoside in mRNA + beta-nicotinamide D-ribonucleotide + 2 H(+). It carries out the reaction a 5'-end FAD-phospho-ribonucleoside in mRNA + H2O = a 5'-end phospho-adenosine-phospho-ribonucleoside in mRNA + FMN + 2 H(+). The catalysed reaction is a 5'-end CoA-ribonucleoside in mRNA + H2O = a 5'-end phospho-adenosine-phospho-ribonucleoside in mRNA + (R)-4'-phosphopantetheine + 2 H(+). Its activity is regulated as follows. The phosphatase activity is inhibited by the product IMP. Its function is as follows. RNA-binding and decapping enzyme that catalyzes the cleavage of the cap structure of snoRNAs and mRNAs in a metal-dependent manner. Part of the U8 snoRNP complex that is required for the accumulation of mature 5.8S and 28S rRNA. Has diphosphatase activity and removes m7G and/or m227G caps from U8 snoRNA and leaves a 5'monophosphate on the RNA. Also catalyzes the cleavage of the cap structure on mRNAs. Does not hydrolyze cap analog structures like 7-methylguanosine nucleoside triphosphate (m7GpppG). Also hydrolysis m7G- and m227G U3-capped RNAs but with less efficiencies. Has broad substrate specificity with manganese or cobalt as cofactor and can act on various RNA species. Binds to the U8 snoRNA; metal is not required for RNA-binding. May play a role in the regulation of snoRNAs and mRNAs degradation. Also acts as a phosphatase; hydrolyzes the non-canonical purine nucleotides inosine diphosphate (IDP) and deoxyinosine diphosphate (dITP) as well as guanosine diphosphate (GDP), deoxyguanosine diphosphate (dGDP), xanthine diphosphate (XDP), inosine triphosphate (ITP) and deoxyinosine triphosphate (ITP) to their respective monophosphate derivatives and does not distinguish between the deoxy- and ribose forms. The order of activity with different substrates is IDP &gt; dIDP &gt;&gt; GDP = dGDP &gt; XDP = ITP = dITP. Binds strongly to GTP, ITP and XTP. Participates in the hydrolysis of dIDP/IDP and probably excludes non-canonical purines from RNA and DNA precursor pools, thus preventing their incorporation into RNA and DNA and avoiding chromosomal lesions. Exhibits decapping activity towards NAD-capped RNAs and FAD-capped RNAs. Exhibits decapping activity towards dpCoA-capped RNAs in vitro. The chain is U8 snoRNA-decapping enzyme (NUDT16) from Homo sapiens (Human).